We begin with the raw amino-acid sequence, 588 residues long: Proteasome-associated ATPase (588 aa).

Residues methionine 1–arginine 10 are compositionally biased toward basic and acidic residues. A disordered region spans residues methionine 1–glycine 23. The stretch at arginine 47–proline 94 forms a coiled coil. Position 276 to 281 (glycine 276 to leucine 281) interacts with ATP. The tract at residues tyrosine 587–leucine 588 is docks into pockets in the proteasome alpha-ring.

This sequence belongs to the AAA ATPase family. In terms of assembly, homohexamer. Assembles into a hexameric ring structure that caps the 20S proteasome core. Strongly interacts with the prokaryotic ubiquitin-like protein Pup through a hydrophobic interface; the interacting region of ARC lies in its N-terminal coiled-coil domain. There is one Pup binding site per ARC hexamer ring. Upon ATP-binding, the C-terminus of ARC interacts with the alpha-rings of the proteasome core, possibly by binding to the intersubunit pockets.

It functions in the pathway protein degradation; proteasomal Pup-dependent pathway. In terms of biological role, ATPase which is responsible for recognizing, binding, unfolding and translocation of pupylated proteins into the bacterial 20S proteasome core particle. May be essential for opening the gate of the 20S proteasome via an interaction with its C-terminus, thereby allowing substrate entry and access to the site of proteolysis. Thus, the C-termini of the proteasomal ATPase may function like a 'key in a lock' to induce gate opening and therefore regulate proteolysis. The polypeptide is Proteasome-associated ATPase (Streptomyces coelicolor (strain ATCC BAA-471 / A3(2) / M145)).